Reading from the N-terminus, the 273-residue chain is Dermonecrotic toxin LdSicTox-alphaIB1bii (273 aa).

His-5 is a catalytic residue. Mg(2+) contacts are provided by Glu-25 and Asp-27. The active-site Nucleophile is the His-41. Disulfide bonds link Cys-45–Cys-51 and Cys-47–Cys-190. A Mg(2+)-binding site is contributed by Asp-85. Asn-250 carries N-linked (GlcNAc...) asparagine glycosylation.

This sequence belongs to the arthropod phospholipase D family. Class II subfamily. The cofactor is Mg(2+). As to expression, expressed by the venom gland.

Its subcellular location is the secreted. The enzyme catalyses an N-(acyl)-sphingosylphosphocholine = an N-(acyl)-sphingosyl-1,3-cyclic phosphate + choline. It carries out the reaction an N-(acyl)-sphingosylphosphoethanolamine = an N-(acyl)-sphingosyl-1,3-cyclic phosphate + ethanolamine. It catalyses the reaction a 1-acyl-sn-glycero-3-phosphocholine = a 1-acyl-sn-glycero-2,3-cyclic phosphate + choline. The catalysed reaction is a 1-acyl-sn-glycero-3-phosphoethanolamine = a 1-acyl-sn-glycero-2,3-cyclic phosphate + ethanolamine. Dermonecrotic toxins cleave the phosphodiester linkage between the phosphate and headgroup of certain phospholipids (sphingolipid and lysolipid substrates), forming an alcohol (often choline) and a cyclic phosphate. This toxin acts on sphingomyelin (SM). It may also act on ceramide phosphoethanolamine (CPE), lysophosphatidylcholine (LPC) and lysophosphatidylethanolamine (LPE), but not on lysophosphatidylserine (LPS), and lysophosphatidylglycerol (LPG). It acts by transphosphatidylation, releasing exclusively cyclic phosphate products as second products. Induces dermonecrosis, hemolysis, increased vascular permeability, edema, inflammatory response, and platelet aggregation. In Loxosceles deserta (Desert recluse spider), this protein is Dermonecrotic toxin LdSicTox-alphaIB1bii.